Here is a 911-residue protein sequence, read N- to C-terminus: Desmoglein-1-gamma (911 aa).

Positions 1 to 23 (MDWHSFRIAALLLTSLVVLEVNS) are cleaved as a signal peptide. A propeptide spanning residues 24–49 (EFQIQVRDHNAKNGTIKWHSIRRQKR) is cleaved from the precursor. 3 consecutive Cadherin domains span residues 50–157 (EWIK…PPVF), 158–269 (SMTT…IPYL), and 270–389 (EQSS…QPGS). The Extracellular segment spans residues 50–519 (EWIKFAAACR…PNVDNVHFGP (470 aa)). Residue N110 is glycosylated (N-linked (GlcNAc...) (high mannose) asparagine). An N-linked (GlcNAc...) asparagine glycan is attached at N180. N-linked (GlcNAc...) asparagine glycosylation occurs at N401. The helical transmembrane segment at 520 to 540 (AGIGLLIMGFLVLGLVPFLLI) threads the bilayer. At 541–911 (SCDCGGAPGG…GMIGNLSIPP (371 aa)) the chain is on the cytoplasmic side. Desmoglein repeat repeat units follow at residues 783-809 (AYPS…TVRE), 810-839 (SYTT…ERVV), 840-869 (GPIS…ERVI), and 870-897 (APGS…ERVI). The Desmoglein repeat 5; truncated repeat unit spans residues 898 to 911 (QPTSGMIGNLSIPP).

As to quaternary structure, interacts with DSC3; there is evidence to suggest that the interaction promotes cell-cell adhesion of keratinocytes. As to expression, expressed in epidermis, brain, liver, skeletal, muscle and testis.

Its subcellular location is the cell membrane. It is found in the cell junction. The protein resides in the desmosome. It localises to the cytoplasm. The protein localises to the nucleus. Its function is as follows. Component of intercellular desmosome junctions. Involved in the interaction of plaque proteins and intermediate filaments mediating cell-cell adhesion. This is Desmoglein-1-gamma (Dsg1c) from Mus musculus (Mouse).